A 114-amino-acid polypeptide reads, in one-letter code: Peroxisomal biogenesis factor 39 (114 aa).

2 disordered regions span residues 1–26 (MSWW…AEPA) and 53–114 (ITAT…PRVS). S102 is modified (phosphoserine).

The protein resides in the peroxisome. In terms of biological role, may be a peroxin involved in the PTS2-mediated protein import pathway. The chain is Peroxisomal biogenesis factor 39 (Pex39) from Mus musculus (Mouse).